A 293-amino-acid chain; its full sequence is Ribosomal RNA small subunit methyltransferase A (293 aa).

The S-adenosyl-L-methionine site is built by asparagine 36, leucine 38, glycine 63, glutamate 84, aspartate 111, and asparagine 132.

This sequence belongs to the class I-like SAM-binding methyltransferase superfamily. rRNA adenine N(6)-methyltransferase family. RsmA subfamily.

It localises to the cytoplasm. The catalysed reaction is adenosine(1518)/adenosine(1519) in 16S rRNA + 4 S-adenosyl-L-methionine = N(6)-dimethyladenosine(1518)/N(6)-dimethyladenosine(1519) in 16S rRNA + 4 S-adenosyl-L-homocysteine + 4 H(+). Functionally, specifically dimethylates two adjacent adenosines (A1518 and A1519) in the loop of a conserved hairpin near the 3'-end of 16S rRNA in the 30S particle. May play a critical role in biogenesis of 30S subunits. This is Ribosomal RNA small subunit methyltransferase A from Treponema denticola (strain ATCC 35405 / DSM 14222 / CIP 103919 / JCM 8153 / KCTC 15104).